The primary structure comprises 142 residues: Hemoglobin subunit alpha-1 (142 aa).

A Globin domain is found at 2-142 (LLSADDKKHI…VSTVLTSKYR (141 aa)). His-59 serves as a coordination point for O2. Residue His-88 coordinates heme b.

This sequence belongs to the globin family. Heterotetramer of two alpha chains and two beta chains. In terms of tissue distribution, red blood cells.

In terms of biological role, involved in oxygen transport from the lung to the various peripheral tissues. This Xenopus laevis (African clawed frog) protein is Hemoglobin subunit alpha-1 (hba1).